Consider the following 167-residue polypeptide: Transmembrane protein 229B (167 aa).

Topologically, residues 1–14 (MASAEPLTALSRWY) are cytoplasmic. The chain crosses the membrane as a helical span at residues 15–35 (LYAIHGYFCEVMFTAAWEFVV). Residues 36–40 (NFNWK) lie on the Extracellular side of the membrane. The helical transmembrane segment at 41-61 (FPGVTSVWALFIYGTSILIVE) threads the bilayer. The Cytoplasmic segment spans residues 62 to 73 (RMYLRLRGRCPL). Residues 74–94 (LVRCVIYTLWTYLWEFTTGFI) traverse the membrane as a helical segment. Over 95–109 (LRQFNACPWDYSQFD) the chain is Extracellular. Residues 110 to 130 (FDFMGLITLEYAVPWFCGALI) form a helical membrane-spanning segment. Over 131–167 (MEQFIIRNTLRLRFDKDAEPGEPASPPALANGHVKTD) the chain is Cytoplasmic. The disordered stretch occupies residues 148-167 (AEPGEPASPPALANGHVKTD).

It belongs to the TMEM229 family.

The protein localises to the membrane. This Mus musculus (Mouse) protein is Transmembrane protein 229B (TMEM229B).